A 261-amino-acid chain; its full sequence is Single-strand annealing weakened protein 1 (261 aa).

In terms of assembly, interacts with MSH2, MSH3, RAD1, RAD10, RAD51 and RAD52.

The protein localises to the nucleus. Catalyzes 3'-non-homologous tail removal of RAD1/RAD10-dependent single-strand annealing recombination intermediates. Plays a key role in targeting RAD1/RAD10 complex to 3'-flap cleavage substrate in recombination. Also contributes to the integrity of ribosomal DNA arrays. The chain is Single-strand annealing weakened protein 1 (SAW1) from Saccharomyces cerevisiae (strain ATCC 204508 / S288c) (Baker's yeast).